The sequence spans 636 residues: ATP-dependent zinc metalloprotease FtsH 1 (636 aa).

Over 1-18 (MKLSPPKKNLPPQKNNEP) the chain is Cytoplasmic. A helical transmembrane segment spans residues 19–39 (PFPYLRLLVQVGIALFLVWIW). At 40–126 (QESLHKATVS…YGSVKPSLLS (87 aa)) the chain is on the periplasmic side. A helical transmembrane segment spans residues 127-147 (QILFSWVVPILIFFLVWFALA). The Cytoplasmic segment spans residues 148-636 (RFMGGGGAGY…KEAPSYSSTL (489 aa)). Residue 220–227 (GPPGTGKT) participates in ATP binding. H442 is a binding site for Zn(2+). Residue E443 is part of the active site. Zn(2+) is bound by residues H446 and D519.

The protein in the central section; belongs to the AAA ATPase family. This sequence in the C-terminal section; belongs to the peptidase M41 family. In terms of assembly, homohexamer. Requires Zn(2+) as cofactor.

The protein localises to the cell inner membrane. Functionally, acts as a processive, ATP-dependent zinc metallopeptidase for both cytoplasmic and membrane proteins. Plays a role in the quality control of integral membrane proteins. The polypeptide is ATP-dependent zinc metalloprotease FtsH 1 (Methylacidiphilum infernorum (isolate V4) (Methylokorus infernorum (strain V4))).